A 235-amino-acid chain; its full sequence is tRNA (adenine(37)-N6)-methyltransferase (235 aa).

In terms of domain architecture, TsaA-like spans 6 to 147; it reads FEQIGVIRSP…YLPFAESLPD (142 aa). S-adenosyl-L-methionine-binding positions include 23 to 25, 64 to 65, R92, and 127 to 130; these read PRQ, HQ, and VDGT.

Belongs to the tRNA methyltransferase O family. In terms of assembly, homodimer.

It carries out the reaction N(6)-L-threonylcarbamoyladenosine(37) in tRNA + S-adenosyl-L-methionine = N(6)-methyl,N(6)-L-threonylcarbamoyladenosine(37) in tRNA + S-adenosyl-L-homocysteine + H(+). Its function is as follows. S-adenosyl-L-methionine-dependent methyltransferase responsible for the addition of the methyl group in the formation of N6-methyl-N6-threonylcarbamoyladenosine at position 37 (m(6)t(6)A37) of the tRNA anticodon loop of tRNA(Thr)(GGU) that read codons starting with adenosine. The methyl group of m(6)t(6)A37 appears to slightly improve the efficiency of the tRNA decoding ability. The sequence is that of tRNA (adenine(37)-N6)-methyltransferase from Escherichia coli (strain K12).